Reading from the N-terminus, the 23-residue chain is U22-ctenitoxin-Co1a (23 aa).

Expressed by the venom gland.

It localises to the secreted. The sequence is that of U22-ctenitoxin-Co1a from Ctenus ornatus (Brazilian spider).